Here is a 380-residue protein sequence, read N- to C-terminus: Lipid-A-disaccharide synthase (380 aa).

This sequence belongs to the LpxB family.

The enzyme catalyses a lipid X + a UDP-2-N,3-O-bis[(3R)-3-hydroxyacyl]-alpha-D-glucosamine = a lipid A disaccharide + UDP + H(+). Its pathway is bacterial outer membrane biogenesis; LPS lipid A biosynthesis. In terms of biological role, condensation of UDP-2,3-diacylglucosamine and 2,3-diacylglucosamine-1-phosphate to form lipid A disaccharide, a precursor of lipid A, a phosphorylated glycolipid that anchors the lipopolysaccharide to the outer membrane of the cell. This is Lipid-A-disaccharide synthase from Pseudomonas savastanoi pv. phaseolicola (strain 1448A / Race 6) (Pseudomonas syringae pv. phaseolicola (strain 1448A / Race 6)).